Consider the following 326-residue polypeptide: Thioredoxin reductase (326 aa).

FAD is bound at residue 40-47 (TGNNKGGQ). An intrachain disulfide couples cysteine 141 to cysteine 144. An FAD-binding site is contributed by 291-300 (DVIDHVYKQA).

The protein belongs to the class-II pyridine nucleotide-disulfide oxidoreductase family. As to quaternary structure, homodimer. It depends on FAD as a cofactor.

The protein resides in the cytoplasm. It catalyses the reaction [thioredoxin]-dithiol + NADP(+) = [thioredoxin]-disulfide + NADPH + H(+). This is Thioredoxin reductase (trxB) from Buchnera aphidicola subsp. Baizongia pistaciae (strain Bp).